The primary structure comprises 537 residues: Oviduct-specific glycoprotein (537 aa).

An N-terminal signal peptide occupies residues Leu1 to Ala18. The region spanning His19–Asp382 is the GH18 domain. An intrachain disulfide couples Cys23 to Cys48. Residues Pro68–Gln69, Gly95–Asn98, Tyr139, Leu208–Asp211, and Trp352 each bind chitin. An N-linked (GlcNAc...) asparagine glycan is attached at Asn399. Disordered regions lie at residues Glu446–Pro475 and Thr498–Leu537. Basic and acidic residues predominate over residues Gly528–Leu537.

Belongs to the glycosyl hydrolase 18 family. In terms of tissue distribution, oviduct.

The protein resides in the cytoplasmic vesicle. The protein localises to the secretory vesicle. Its function is as follows. Binds to oocyte zona pellucida in vivo. May play a role in the fertilization process and/or early embryonic development. The polypeptide is Oviduct-specific glycoprotein (OVGP1) (Bos taurus (Bovine)).